Reading from the N-terminus, the 173-residue chain is Large ribosomal subunit protein uL10 (173 aa).

Belongs to the universal ribosomal protein uL10 family. In terms of assembly, part of the ribosomal stalk of the 50S ribosomal subunit. The N-terminus interacts with L11 and the large rRNA to form the base of the stalk. The C-terminus forms an elongated spine to which L12 dimers bind in a sequential fashion forming a multimeric L10(L12)X complex.

Forms part of the ribosomal stalk, playing a central role in the interaction of the ribosome with GTP-bound translation factors. This is Large ribosomal subunit protein uL10 from Geobacter sp. (strain M21).